The sequence spans 236 residues: 2,3,4,5-tetrahydropyridine-2,6-dicarboxylate N-acetyltransferase (236 aa).

It belongs to the transferase hexapeptide repeat family. DapH subfamily.

The enzyme catalyses (S)-2,3,4,5-tetrahydrodipicolinate + acetyl-CoA + H2O = L-2-acetamido-6-oxoheptanedioate + CoA. The protein operates within amino-acid biosynthesis; L-lysine biosynthesis via DAP pathway; LL-2,6-diaminopimelate from (S)-tetrahydrodipicolinate (acetylase route): step 1/3. In terms of biological role, catalyzes the transfer of an acetyl group from acetyl-CoA to tetrahydrodipicolinate. This is 2,3,4,5-tetrahydropyridine-2,6-dicarboxylate N-acetyltransferase from Clostridium botulinum (strain Okra / Type B1).